The chain runs to 144 residues: UPF0102 protein BPSL3274 (144 aa).

The disordered stretch occupies residues 1-28; that stretch reads MCHAREASPGTGEPEAAPRDNFPREAGS. Residues 16–28 are compositionally biased toward basic and acidic residues; the sequence is AAPRDNFPREAGS.

Belongs to the UPF0102 family.

This chain is UPF0102 protein BPSL3274, found in Burkholderia pseudomallei (strain K96243).